The following is a 670-amino-acid chain: Alpha-1,4-glucan:maltose-1-phosphate maltosyltransferase (670 aa).

Lysine 262, glutamine 322, and aspartate 357 together coordinate alpha-maltose 1-phosphate. The Nucleophile role is filled by aspartate 393. Position 394 (asparagine 394) interacts with alpha-maltose 1-phosphate. Glutamate 422 serves as the catalytic Proton donor. 534 to 535 (KY) contributes to the alpha-maltose 1-phosphate binding site.

This sequence belongs to the glycosyl hydrolase 13 family. GlgE subfamily. As to quaternary structure, homodimer.

It catalyses the reaction alpha-maltose 1-phosphate + [(1-&gt;4)-alpha-D-glucosyl](n) = [(1-&gt;4)-alpha-D-glucosyl](n+2) + phosphate. In terms of biological role, maltosyltransferase that uses maltose 1-phosphate (M1P) as the sugar donor to elongate linear or branched alpha-(1-&gt;4)-glucans. Is involved in a branched alpha-glucan biosynthetic pathway from trehalose, together with TreS, Mak and GlgB. In Chlorobaculum tepidum (strain ATCC 49652 / DSM 12025 / NBRC 103806 / TLS) (Chlorobium tepidum), this protein is Alpha-1,4-glucan:maltose-1-phosphate maltosyltransferase.